The sequence spans 369 residues: 3-dehydroquinate synthase (369 aa).

Residues Asp70 to Lys75, Gly104 to Asp108, Thr128 to Thr129, Lys141, Lys150, and Thr168 to Thr171 each bind NAD(+). Positions 183, 246, and 262 each coordinate Zn(2+).

Belongs to the sugar phosphate cyclases superfamily. Dehydroquinate synthase family. Co(2+) is required as a cofactor. Requires Zn(2+) as cofactor. It depends on NAD(+) as a cofactor.

The protein resides in the cytoplasm. The catalysed reaction is 7-phospho-2-dehydro-3-deoxy-D-arabino-heptonate = 3-dehydroquinate + phosphate. Its pathway is metabolic intermediate biosynthesis; chorismate biosynthesis; chorismate from D-erythrose 4-phosphate and phosphoenolpyruvate: step 2/7. Functionally, catalyzes the conversion of 3-deoxy-D-arabino-heptulosonate 7-phosphate (DAHP) to dehydroquinate (DHQ). The chain is 3-dehydroquinate synthase from Rhodococcus erythropolis (strain PR4 / NBRC 100887).